A 157-amino-acid polypeptide reads, in one-letter code: uncharacterized protein (157 aa).

The signal sequence occupies residues 1-23 (MEALRRAHEATLRLLLCRPWASG).

The protein localises to the secreted. This is an uncharacterized protein from Mus musculus (Mouse).